The primary structure comprises 135 residues: Phosphoribosyl-AMP cyclohydrolase (135 aa).

Aspartate 89 lines the Mg(2+) pocket. Position 90 (cysteine 90) interacts with Zn(2+). The Mg(2+) site is built by aspartate 91 and aspartate 93. 2 residues coordinate Zn(2+): cysteine 106 and cysteine 113.

The protein belongs to the PRA-CH family. In terms of assembly, homodimer. Requires Mg(2+) as cofactor. It depends on Zn(2+) as a cofactor.

Its subcellular location is the cytoplasm. The enzyme catalyses 1-(5-phospho-beta-D-ribosyl)-5'-AMP + H2O = 1-(5-phospho-beta-D-ribosyl)-5-[(5-phospho-beta-D-ribosylamino)methylideneamino]imidazole-4-carboxamide. Its pathway is amino-acid biosynthesis; L-histidine biosynthesis; L-histidine from 5-phospho-alpha-D-ribose 1-diphosphate: step 3/9. Functionally, catalyzes the hydrolysis of the adenine ring of phosphoribosyl-AMP. The protein is Phosphoribosyl-AMP cyclohydrolase of Bifidobacterium adolescentis (strain ATCC 15703 / DSM 20083 / NCTC 11814 / E194a).